Consider the following 337-residue polypeptide: Deoxyhypusine hydroxylase (337 aa).

2 HEAT-like PBS-type repeats span residues 73 to 99 and 106 to 132; these read LKHELAYCLGQTGNTAAVKPLRQVLSD and CRHEAAEALGALGWADNLDILREYRDR. Residues His-75, Glu-76, His-108, and Glu-109 each contribute to the Fe cation site. A compositionally biased stretch (basic and acidic residues) spans 156 to 165; that stretch reads AERQKEKLRP. The segment at 156–183 is disordered; it reads AERQKEKLRPSDFASIDPAPPMPESDKE. HEAT-like PBS-type repeat units follow at residues 202–235, 240–266, and 273–300; these read SRYRAMFALRDLASPPDLPTATPAVLALAKGLSD, FRHEIAFVFGQLSHPASIPALTEALSN, and VRHEAAEALGSLGEKDGVEDTLRKFLHD. His-242, Glu-243, His-275, and Glu-276 together coordinate Fe cation.

It belongs to the deoxyhypusine hydroxylase family. Fe(2+) serves as cofactor.

The protein resides in the cytoplasm. It localises to the nucleus. It carries out the reaction [eIF5A protein]-deoxyhypusine + AH2 + O2 = [eIF5A protein]-hypusine + A + H2O. It participates in protein modification; eIF5A hypusination. In terms of biological role, catalyzes the hydroxylation of the N(6)-(4-aminobutyl)-L-lysine intermediate to form hypusine, an essential post-translational modification only found in mature eIF-5A factor. In Gibberella zeae (strain ATCC MYA-4620 / CBS 123657 / FGSC 9075 / NRRL 31084 / PH-1) (Wheat head blight fungus), this protein is Deoxyhypusine hydroxylase.